The sequence spans 566 residues: Oxygen-dependent choline dehydrogenase (566 aa).

7–36 contributes to the FAD binding site; sequence DYIICGAGSAGNVLATRLTEDPNVTVLLLE. The tract at residues 185–204 is disordered; sequence EGFGPMDRTVTPKGRRASTA. Catalysis depends on histidine 474, which acts as the Proton acceptor.

This sequence belongs to the GMC oxidoreductase family. FAD is required as a cofactor.

The enzyme catalyses choline + A = betaine aldehyde + AH2. The catalysed reaction is betaine aldehyde + NAD(+) + H2O = glycine betaine + NADH + 2 H(+). It participates in amine and polyamine biosynthesis; betaine biosynthesis via choline pathway; betaine aldehyde from choline (cytochrome c reductase route): step 1/1. Its function is as follows. Involved in the biosynthesis of the osmoprotectant glycine betaine. Catalyzes the oxidation of choline to betaine aldehyde and betaine aldehyde to glycine betaine at the same rate. This chain is Oxygen-dependent choline dehydrogenase, found in Burkholderia vietnamiensis (strain G4 / LMG 22486) (Burkholderia cepacia (strain R1808)).